The primary structure comprises 266 residues: bZIP transcription factor 12 (266 aa).

Residues 184–248 enclose the bZIP domain; that stretch reads AMQRQKRMIK…KELKEMVVPV (65 aa). The segment at 187-205 is basic motif; it reads RQKRMIKNRESAARSRERK. Residues 202-244 are a coiled coil; that stretch reads RERKQAYIAELESLVTQLEEENAKMFKEQEEQHQKRLKELKEM. The interval 212–219 is leucine-zipper; that stretch reads LESLVTQL.

The protein resides in the nucleus. Functionally, transcription activator that binds to the ABA-responsive elements (ABREs) in vitro. Involved in abiotic stress responses and abscisic acid (ABA) signaling. Involved in the signaling pathway that induces growth inhibition in response to D-allose. This Oryza sativa subsp. japonica (Rice) protein is bZIP transcription factor 12.